We begin with the raw amino-acid sequence, 201 residues long: ATP-dependent Clp protease proteolytic subunit (201 aa).

The active-site Nucleophile is S100. H125 is an active-site residue.

This sequence belongs to the peptidase S14 family. As to quaternary structure, component of the chloroplastic Clp protease core complex.

The protein localises to the plastid. It localises to the chloroplast stroma. It carries out the reaction Hydrolysis of proteins to small peptides in the presence of ATP and magnesium. alpha-casein is the usual test substrate. In the absence of ATP, only oligopeptides shorter than five residues are hydrolyzed (such as succinyl-Leu-Tyr-|-NHMec, and Leu-Tyr-Leu-|-Tyr-Trp, in which cleavage of the -Tyr-|-Leu- and -Tyr-|-Trp bonds also occurs).. Cleaves peptides in various proteins in a process that requires ATP hydrolysis. Has a chymotrypsin-like activity. Plays a major role in the degradation of misfolded proteins. In Chloranthus spicatus (Chulantree), this protein is ATP-dependent Clp protease proteolytic subunit.